Reading from the N-terminus, the 193-residue chain is Corrinoid adenosyltransferase (193 aa).

ATP-binding positions include 10 to 18, lysine 28, 137 to 142, and asparagine 163; these read TRTGDDGTT and RRAERS.

The protein belongs to the Cob(I)alamin adenosyltransferase family.

Its subcellular location is the cytoplasm. It carries out the reaction 2 cob(II)yrinate a,c diamide + reduced [electron-transfer flavoprotein] + 2 ATP = 2 adenosylcob(III)yrinate a,c-diamide + 2 triphosphate + oxidized [electron-transfer flavoprotein] + 3 H(+). It catalyses the reaction 2 cob(II)alamin + reduced [electron-transfer flavoprotein] + 2 ATP = 2 adenosylcob(III)alamin + 2 triphosphate + oxidized [electron-transfer flavoprotein] + 3 H(+). The protein operates within cofactor biosynthesis; adenosylcobalamin biosynthesis; adenosylcobalamin from cob(II)yrinate a,c-diamide: step 2/7. The sequence is that of Corrinoid adenosyltransferase from Mycobacterium bovis (strain ATCC BAA-935 / AF2122/97).